Here is a 78-residue protein sequence, read N- to C-terminus: Colicin-V immunity protein (78 aa).

Functionally, this protein is able to protect a cell, which harbors the plasmid ColV encoding colicin V, against colicin V. The sequence is that of Colicin-V immunity protein (cvi) from Escherichia coli.